Here is a 143-residue protein sequence, read N- to C-terminus: Large ribosomal subunit protein uL13 (143 aa).

It belongs to the universal ribosomal protein uL13 family. In terms of assembly, part of the 50S ribosomal subunit.

Functionally, this protein is one of the early assembly proteins of the 50S ribosomal subunit, although it is not seen to bind rRNA by itself. It is important during the early stages of 50S assembly. This is Large ribosomal subunit protein uL13 from Geobacter sulfurreducens (strain ATCC 51573 / DSM 12127 / PCA).